Reading from the N-terminus, the 244-residue chain is Protein-L-isoaspartate O-methyltransferase (244 aa).

A disordered region spans residues 1 to 39 (MINPFSSFRWRHSSRSPAGIPEVEPQPPDASDPFASQRE). S92 is a catalytic residue.

It belongs to the methyltransferase superfamily. L-isoaspartyl/D-aspartyl protein methyltransferase family.

The protein resides in the cytoplasm. The catalysed reaction is [protein]-L-isoaspartate + S-adenosyl-L-methionine = [protein]-L-isoaspartate alpha-methyl ester + S-adenosyl-L-homocysteine. Functionally, catalyzes the methyl esterification of L-isoaspartyl residues in peptides and proteins that result from spontaneous decomposition of normal L-aspartyl and L-asparaginyl residues. It plays a role in the repair and/or degradation of damaged proteins. The polypeptide is Protein-L-isoaspartate O-methyltransferase (Synechococcus sp. (strain JA-2-3B'a(2-13)) (Cyanobacteria bacterium Yellowstone B-Prime)).